The chain runs to 673 residues: NADH-quinone oxidoreductase chain 3 (673 aa).

The region spanning 5-90 is the 2Fe-2S ferredoxin-type domain; it reads RKIKIDDTII…PSEIRTNSPM (86 aa). Residues Cys37, Cys48, Cys51, and Cys66 each coordinate [2Fe-2S] cluster. The 40-residue stretch at 90–129 folds into the 4Fe-4S His(Cys)3-ligated-type domain; that stretch reads MVKKAREGVMEFLLINHPLDCPICDQGGECDLQDQAMAYG. [4Fe-4S] cluster is bound by residues His106, Cys110, Cys113, Cys119, Cys158, Cys161, Cys164, and Cys208. The 4Fe-4S Mo/W bis-MGD-type domain occupies 227 to 283; sequence LTKTESIDVMDALGSSIRIDTKGREVMRILPRNHDGVNEEWISDKTRFVWDGLRRQR.

Belongs to the complex I 75 kDa subunit family. In terms of assembly, NDH-1 is composed of at least 14 different subunits, Nqo1 to Nqo14. The complex has a L-shaped structure, with the hydrophobic arm (subunits Nqo7, Nqo8, Nqo10 to Nqo14) embedded in the inner membrane and the hydrophilic peripheral arm (subunits Nqo1 to Nqo6, Nqo9) protruding into the bacterial cytoplasm. The hydrophilic domain contains all the redox centers. Requires [2Fe-2S] cluster as cofactor. The cofactor is [4Fe-4S] cluster.

It localises to the cell inner membrane. It carries out the reaction a quinone + NADH + 5 H(+)(in) = a quinol + NAD(+) + 4 H(+)(out). In terms of biological role, NDH-1 shuttles electrons from NADH, via FMN and iron-sulfur (Fe-S) centers, to quinones in the respiratory chain. The immediate electron acceptor for the enzyme in this species is believed to be ubiquinone. Couples the redox reaction to proton translocation (for every two electrons transferred, four hydrogen ions are translocated across the cytoplasmic membrane), and thus conserves the redox energy in a proton gradient. This is NADH-quinone oxidoreductase chain 3 from Paracoccus denitrificans.